We begin with the raw amino-acid sequence, 1816 residues long: MSGASVKVAVRVRPFNSRETSKESKCIIQMQGNSTSIINPKNPKEAPKSFSFDYSYWSHTSPEDPCFASQNRVYNDIGKEMLLHAFEGYNVCIFAYGQTGAGKSYTMMGKQEESQAGIIPQLCEELFEKINDNCNEEMSYSVEVSYMEIYCERVRDLLNPKNKGNLRVREHPLLGPYVEDLSKLAVTSYTDIADLMDAGNKARTVAATNMNETSSRSHAVFTIVFTQKKHDNETNLSTEKVSKISLVDLAGSERADSTGAKGTRLKEGANINKSLTTLGKVISALAEVDNCTSKSKKKKKTDFIPYRDSVLTWLLRENLGGNSRTAMVAALSPADINYDETLSTLRYADRAKQIKCNAVINEDPNAKLVRELKEEVTRLKDLLRAQGLGDIIDIDPLIDDYSGSGSKYLKDFQNNKHRYLLASENQRPGHFSTASMGSLTSSPSSCSLSSQVGLTSVTSIQERIMSTPGGEEAIERLKESEKIIAELNETWEEKLRKTEAIRMEREALLAEMGVAIREDGGTLGVFSPKKTPHLVNLNEDPLMSECLLYYIKDGITRVGQADAERRQDIVLSGAHIKEEHCIFRSERSNSGEVIVTLEPCERSETYVNGKRVSQPVQLRSGNRIIMGKNHVFRFNHPEQARAEREKTPSAETPSEPVDWTFAQRELLEKQGIDMKQEMEKRLQEMEILYKKEKEEADLLLEQQRLDYESKLQALQKQVETRSLAAETTEEEEEEEEVPWTQHEFELAQWAFRKWKSHQFTSLRDLLWGNAVYLKEANAISVELKKKVQFQFVLLTDTLYSPLPPELLPTEMEKTHEDRPFPRTVVAVEVQDLKNGATHYWSLEKLKQRLDLMREMYDRAGEMASSAQDESETTVTGSDPFYDRFHWFKLVGSSPIFHGCVNERLADRTPSPTFSTADSDITELADEQQDEMEDFDDEAFVDDAGSDAGTEEGSDLFSDGHDPFYDRSPWFILVGRAFVYLSNLLYPVPLIHRVAIVSEKGEVRGFLRVAVQAIAADEEAPDYGSGIRQSGTAKISFDNEYFNQSDFSSVAMTRSGLSLEELRIVEGQGQSSEVITPPEEISRINDLDLKSSTLLDGKMVMEGFSEEIGNHLKLGSAFTFRVTVLQASGILPEYADIFCQFNFLHRHDEAFSTEPLKNNGRGSPLAFYHVQNIAVEITESFVDYIKTKPIVFEVFGHYQQHPLHLQGQELNSPPQPCRRFFPPPMPLSKPVPATKLNTMSKTSLGQSMSKYDLLVWFEISELEPTGEYIPAVVDHTAGLPCQGTFLLHQGIQRRITVTIIHEKGSELHWKDVRELVVGRIRNKPEVDEAAVDAILSLNIISAKYLKSSHNSSRTFYRFEAVWDSSLHNSLLLNRVTPYGEKIYMTLSAYLELDHCIQPAVITKDVCMVFYSRDAKISPPRSLRSLFGSGYSKSPDSNRVTGIYELSLCKMSDTGSPGMQRRRRKILDTSVAYVRGEENLAGWRPRGDSLILEHQWELEKLELLHEVEKTRHFLLLRERLGDSIPKSLSDSLSPSLSSGTLSTSTSISSQISTTTFESAITPSESSGYDSGDIESLVDREKELATKCLQLLTHTFNREFSQVHGSVSDCKLSDISPIGRDPSESSFSSATLTPSSTCPSLVDSRSNSLDQKTPEANSRASSPCPEFEQFQIVPAVETPYLARAGKNEFLNLVPDIEEIRPSSVVSKKGYLHFKEPLYSNWAKHFVVVRRPYVFIYNSDKDPVERGIINLSTAQVEYSEDQQAMVKTPNTFAVCTKHRGVLLQALNDKDMNDWLYAFNPLLAGTIRSKLSRRCPSQSKY.

Ser2 carries the post-translational modification N-acetylserine. The Kinesin motor domain occupies 5 to 354; that stretch reads SVKVAVRVRP…LRYADRAKQI (350 aa). 97 to 104 lines the ATP pocket; the sequence is GQTGAGKS. Residues 270-350 form an interaction with KIFBP region; that stretch reads NINKSLTTLG…TLSTLRYADR (81 aa). Residues 365-386 are a coiled coil; the sequence is NAKLVRELKEEVTRLKDLLRAQ. The disordered stretch occupies residues 431–450; the sequence is FSTASMGSLTSSPSSCSLSS. Over residues 432-450 the composition is skewed to low complexity; it reads STASMGSLTSSPSSCSLSS. Residues 470–502 are a coiled coil; sequence GEEAIERLKESEKIIAELNETWEEKLRKTEAIR. The 57-residue stretch at 556 to 612 folds into the FHA domain; it reads TRVGQADAERRQDIVLSGAHIKEEHCIFRSERSNSGEVIVTLEPCERSETYVNGKRV. Phosphothreonine is present on residues Thr647 and Thr652. Phosphoserine occurs at positions 663 and 665. Coiled coils occupy residues 668–737 and 841–869; these read EKQG…EEEV and SLEK…AQDE. Ser1054 and Ser1057 each carry phosphoserine. Residue Thr1075 is modified to Phosphothreonine. Residues Asn1141, Ser1416, Ser1454, and Ser1487 each carry the phosphoserine modification. A disordered region spans residues 1550 to 1570; the sequence is STTTFESAITPSESSGYDSGD. Polar residues predominate over residues 1554–1566; it reads FESAITPSESSGY. Phosphoserine is present on residues Ser1573, Ser1603, Ser1610, and Ser1613. The segment at 1617-1660 is disordered; that stretch reads RDPSESSFSSATLTPSSTCPSLVDSRSNSLDQKTPEANSRASSP. Residues 1621 to 1634 are compositionally biased toward low complexity; the sequence is ESSFSSATLTPSST. Over residues 1640–1658 the composition is skewed to polar residues; the sequence is DSRSNSLDQKTPEANSRAS. Residues 1702 to 1799 enclose the PH domain; it reads VSKKGYLHFK…WLYAFNPLLA (98 aa).

It belongs to the TRAFAC class myosin-kinesin ATPase superfamily. Kinesin family. Unc-104 subfamily. As to quaternary structure, monomer. Interacts with KIFBP; positively regulates KIF1B microtubule motor activity. Interacts (via C-terminus end of the kinesin-motor domain) with CHP1; the interaction occurs in a calcium-dependent manner. In terms of assembly, interacts with MADD (via death domain); links this isoform to Rab3-carrying vesicles in anterograde synaptic vesicle transport. Isoform 3 is abundant in the skeletal muscle. It is also expressed in fetal brain, lung and kidney, and adult heart, placenta, testis, ovary and small intestine. Isoform 2 is abundant in the brain and also expressed in fetal heart, lung, liver and kidney, and adult skeletal muscle, placenta, liver, kidney, heart, spleen, thymus, prostate, testis, ovary, small intestine, colon and pancreas.

The protein resides in the cytoplasm. Its subcellular location is the cytoskeleton. It is found in the cytoplasmic vesicle. It localises to the secretory vesicle. The protein localises to the synaptic vesicle membrane. The protein resides in the mitochondrion. It carries out the reaction ATP + H2O + a kinesin associated with a microtubule at position (n) = ADP + phosphate a kinesin associated with a microtubule at position (n+1, toward the plus end).. Its function is as follows. Has a plus-end-directed microtubule motor activity and functions as a motor for transport of vesicles and organelles along microtubules. In terms of biological role, has a plus-end-directed microtubule motor activity and functions as a motor for anterograde synaptic vesicle transport along axonal microtubules from the cell body to the presynapse in neuronal cells. Functions as a downstream effector in a developmental apoptotic pathway that is activated when nerve growth factor (NGF) becomes limiting for neuronal progenitor cells. Functionally, has a plus-end-directed microtubule motor activity and functions as a motor for anterograde transport of mitochondria. The protein is Kinesin-like protein KIF1B of Homo sapiens (Human).